A 492-amino-acid polypeptide reads, in one-letter code: Catalase isozyme 1 (492 aa).

Residues H65 and N138 contribute to the active site. A heme-binding site is contributed by Y348.

This sequence belongs to the catalase family. As to quaternary structure, homotetramer. Heme serves as cofactor. As to expression, high expression in seeds and early seedlings.

The protein localises to the glyoxysome. The enzyme catalyses 2 H2O2 = O2 + 2 H2O. In terms of biological role, occurs in almost all aerobically respiring organisms and serves to protect cells from the toxic effects of hydrogen peroxide. In Cucurbita pepo (Vegetable marrow), this protein is Catalase isozyme 1 (CAT1).